Consider the following 494-residue polypeptide: UDP-N-acetylmuramate--L-alanine ligase (494 aa).

140 to 146 provides a ligand contact to ATP; it reads GTHGKTT.

It belongs to the MurCDEF family.

It is found in the cytoplasm. The catalysed reaction is UDP-N-acetyl-alpha-D-muramate + L-alanine + ATP = UDP-N-acetyl-alpha-D-muramoyl-L-alanine + ADP + phosphate + H(+). The protein operates within cell wall biogenesis; peptidoglycan biosynthesis. Cell wall formation. In Trichormus variabilis (strain ATCC 29413 / PCC 7937) (Anabaena variabilis), this protein is UDP-N-acetylmuramate--L-alanine ligase.